Here is a 299-residue protein sequence, read N- to C-terminus: MKPDAHQVKQFLLNLQDTICQQLTAVDGAEFVEDSWQRESGGGGRSRVLRNGGVFEQAGVNFSHVHGEAMPASATAHRPELAGRSFEAMGVSLVVHPHNPYVPTSHANVRFFIAEKPGAEPVWWFGGGFDLTPFYGFEEDAIHWHRTARDLCLPFGEDVYPRYKKWCDDYFYLKHRNEQRGIGGLFFDDLNTPDFDHCFAFMQAVGKGYTDAYLPIVERRKAMAYAERERNFQLYRRGRYVEFNLVWDRGTLFGLQTGGRTESILMSMPPLVRWEYDYQPKDGSPEAALSEFIKVRDWV.

Substrate is bound at residue S92. The a divalent metal cation site is built by H96 and H106. H106 serves as the catalytic Proton donor. 108-110 (NVR) provides a ligand contact to substrate. Residues H145 and H175 each contribute to the a divalent metal cation site. Residues 240–275 (YVEFNLVWDRGTLFGLQTGGRTESILMSMPPLVRWE) are important for dimerization. 258-260 (GGR) serves as a coordination point for substrate.

The protein belongs to the aerobic coproporphyrinogen-III oxidase family. Homodimer. Requires a divalent metal cation as cofactor.

It is found in the cytoplasm. The catalysed reaction is coproporphyrinogen III + O2 + 2 H(+) = protoporphyrinogen IX + 2 CO2 + 2 H2O. It participates in porphyrin-containing compound metabolism; protoporphyrin-IX biosynthesis; protoporphyrinogen-IX from coproporphyrinogen-III (O2 route): step 1/1. Its function is as follows. Involved in the heme biosynthesis. Catalyzes the aerobic oxidative decarboxylation of propionate groups of rings A and B of coproporphyrinogen-III to yield the vinyl groups in protoporphyrinogen-IX. The chain is Oxygen-dependent coproporphyrinogen-III oxidase from Shigella dysenteriae serotype 1 (strain Sd197).